We begin with the raw amino-acid sequence, 170 residues long: Nicotinamide-nucleotide adenylyltransferase (170 aa).

Belongs to the archaeal NMN adenylyltransferase family.

Its subcellular location is the cytoplasm. It catalyses the reaction beta-nicotinamide D-ribonucleotide + ATP + H(+) = diphosphate + NAD(+). It participates in cofactor biosynthesis; NAD(+) biosynthesis; NAD(+) from nicotinamide D-ribonucleotide: step 1/1. This chain is Nicotinamide-nucleotide adenylyltransferase, found in Methanothrix thermoacetophila (strain DSM 6194 / JCM 14653 / NBRC 101360 / PT) (Methanosaeta thermophila).